A 90-amino-acid polypeptide reads, in one-letter code: Probable Fe(2+)-trafficking protein (90 aa).

This sequence belongs to the Fe(2+)-trafficking protein family.

Could be a mediator in iron transactions between iron acquisition and iron-requiring processes, such as synthesis and/or repair of Fe-S clusters in biosynthetic enzymes. This chain is Probable Fe(2+)-trafficking protein, found in Vibrio atlanticus (strain LGP32) (Vibrio splendidus (strain Mel32)).